The sequence spans 578 residues: Avenacosidase 2 (578 aa).

The N-terminal 57 residues, 1 to 57, are a transit peptide targeting the chloroplast; it reads MALLCSALSNSTHPSFRSHIAGANSENLWHLSAHPAQKSKRRCNLTLSSRAAARISS. A beta-D-glucoside is bound by residues Q89, H193, and 238-239; that span reads NE. Residue E239 is the Proton donor of the active site. A disulfide bridge connects residues C258 and C264. A beta-D-glucoside is bound by residues Y381, E454, W504, 511–512, and F520; that span reads EW. E454 (nucleophile) is an active-site residue.

This sequence belongs to the glycosyl hydrolase 1 family. In terms of assembly, heteromultimer with P60A in a 1:1 stoichiometry. Aggregates to form the fibrillar stromacentre.

The protein resides in the plastid. It is found in the chloroplast stroma. It carries out the reaction avenacoside B + H2O = 26-desgluco-avenacoside B + D-glucose. Beta-glucosidase acting as a preformed defense system. Hydrolyzes the bisdesmosides avenacosides A and B to 26-desgluco-avenacosides exhibiting fungicidal activity. Can use beta-fucoside &gt; beta-glucoside &gt; beta-galactoside &gt; beta-xyloside as substrates, but not alpha-glycosides, beta-thioglucosides and disaccharides. This chain is Avenacosidase 2 (P60B), found in Avena sativa (Oat).